The chain runs to 338 residues: MKAPFTSLAGFRAVFETLPQVDAEAVEAATARNETLTKPKGALGRLEDLAIWYAGWIGDGRPALERPQVAIFAGNHGIAARGVSAFPPEVTVQMVANYRAGGAAVNQLCHVAGASMTVTELELDRPTLDFTVSPAMTEDELVAALAAGWEAVDDESDLLVVGEMGIGNTTAAAAIAAALFGGTAAEWTGRGSGVAGSALEAKTRVVAEGLERHGDALSDPLEVLRCLGGREIAAMAGAIARARVGRTPVILDGFICTSAAAVLHALTPSALDHAIAGHVSAEGAHPAALARIGKEPLLDLGMRLGEGTGAIVAINILRSAVACLSGMATFAEAGVSGG.

The Proton acceptor role is filled by E306.

It belongs to the CobT family.

It carries out the reaction 5,6-dimethylbenzimidazole + nicotinate beta-D-ribonucleotide = alpha-ribazole 5'-phosphate + nicotinate + H(+). The protein operates within nucleoside biosynthesis; alpha-ribazole biosynthesis; alpha-ribazole from 5,6-dimethylbenzimidazole: step 1/2. Functionally, catalyzes the synthesis of alpha-ribazole-5'-phosphate from nicotinate mononucleotide (NAMN) and 5,6-dimethylbenzimidazole (DMB). The protein is Nicotinate-nucleotide--dimethylbenzimidazole phosphoribosyltransferase of Cereibacter sphaeroides (strain KD131 / KCTC 12085) (Rhodobacter sphaeroides).